Reading from the N-terminus, the 597-residue chain is Dynein intermediate chain 3, ciliary (597 aa).

WD repeat units lie at residues Glu159–Phe210, Lys213–Glu253, Ser260–Glu301, Glu314–Lys354, Glu361–Met400, Tyr404–Thr444, and Val449–Gln488. 2 disordered regions span residues Arg512 to Ala546 and Ala562 to Gly597. Residues Gln528–Leu542 show a composition bias toward acidic residues. Positions Gly584–Gly597 are enriched in basic and acidic residues.

This sequence belongs to the dynein intermediate chain family. In terms of assembly, consists of at least two heavy chains (alpha and beta), three intermediate chains and several light chains.

The protein resides in the cytoplasm. It localises to the cytoskeleton. Its subcellular location is the cilium axoneme. Its function is as follows. May play a role in the regulation of dynein heavy chain activity. In Heliocidaris crassispina (Sea urchin), this protein is Dynein intermediate chain 3, ciliary.